The chain runs to 183 residues: Protein GrpE (183 aa).

The span at 1 to 14 (MSNEENKINEEALK) shows a compositional bias: basic and acidic residues. Positions 1–20 (MSNEENKINEEALKQQDAAE) are disordered.

Belongs to the GrpE family. In terms of assembly, homodimer.

Its subcellular location is the cytoplasm. Participates actively in the response to hyperosmotic and heat shock by preventing the aggregation of stress-denatured proteins, in association with DnaK and GrpE. It is the nucleotide exchange factor for DnaK and may function as a thermosensor. Unfolded proteins bind initially to DnaJ; upon interaction with the DnaJ-bound protein, DnaK hydrolyzes its bound ATP, resulting in the formation of a stable complex. GrpE releases ADP from DnaK; ATP binding to DnaK triggers the release of the substrate protein, thus completing the reaction cycle. Several rounds of ATP-dependent interactions between DnaJ, DnaK and GrpE are required for fully efficient folding. The protein is Protein GrpE of Vibrio vulnificus (strain CMCP6).